The primary structure comprises 1749 residues: Intraflagellar transport protein 172 homolog (1749 aa).

Methionine 1 bears the N-acetylmethionine mark. Lysine 4 is covalently cross-linked (Glycyl lysine isopeptide (Lys-Gly) (interchain with G-Cter in SUMO1)). 9 WD repeats span residues 14-53 (DGAAKVTCMAWSQNNAKFAVCTVDRVVLLYDEHGERRDKF), 64-103 (RKSYMVKGMAFSPDSTKIAIGQTDNIIYVYKIGEDWGDKK), 110-148 (IQTSAVTCLQWPAEYVIVFGLAEGKVRLANTKTNKSSTI), 150-191 (GTES…ESQG), 195-233 (NHPCPPYALAWATNSIVAAGCDRRIVAYGKEGHVLQTFD), 238-278 (PQER…WEEA), 284-323 (ANLYTVTALAWKRDGSRLCAGTLCGGVEQFDCCLRRSIYK), 483-520 (SHESRVDWLELNETGHKLLFRDRKLRLHLYDIESCSKT), and 521-559 (MILNFCSYVQWVPGSDVLVAQNRNSLCVWYNIEAPERVT). A TPR 1 repeat occupies 593–624 (DEGLIEFGTAIDDGNYTRATAFLETLEMTPET). The residue at position 672 (arginine 672) is an Omega-N-methylarginine. 13 TPR repeats span residues 692 to 725 (EKNYKLAEMIFLEQNAVEEAMDMYQELHRWEECI), 809 to 842 (GELYERAGDLFEKIRNPQRALECYCKGNAFMKAV), 854 to 887 (VRLEEAWGDHLVQQKQLDAAINHYIEARCSIKAI), 912 to 945 (SKYYPRVAQHYASLQEYEIAEELYTKGDRTKDAI), 947 to 970 (MYTQAGRWEQAHKLAMKCMRPEDV), 971 to 1004 (SVLYITQAQEMEKQGKYREAERLYVTVEEPDLAI), 1042 to 1075 (EGRLQEAEYHYLEAQEWKATVNMYRSSGLWEEAY), 1142 to 1175 (PEIHLKYAMYLEDEGKFEEAEAEFIRAGKPKEAV), 1276 to 1309 (VEGLVEQARQWEQAGEYSRAVDCYLKVRDSGSSG), 1345 to 1378 (IGKHSAAAELYLNLDLVKEAIDAFIEGEEWNKAK), 1411 to 1445 (GVDVVAALDLYVEQGQWDKCIETATKQNYKILHKY), 1447 to 1477 (ALYATHLIREGGYAQALALYVQHGAPANPQN), and 1574 to 1607 (DKAFYEAGTAAKEVGWENMAFIFLNRFLDLTDAI).

Belongs to the IFT172 family. In terms of assembly, interacts with IFT88. Interacts with IFT57. Interacts with RABL2/RABL2A; binds preferentially to GDP-bound RABL2. As to expression, co-localizes with RABL2/RABL2A in the midpiece of elongated spermatids within the testis (at protein level). Expressed in the flagellum of elongated spermatids and sperm in the testis lumen (at protein level).

It is found in the cell projection. The protein resides in the cilium. Its function is as follows. Required for the maintenance and formation of cilia. Plays an indirect role in hedgehog (Hh) signaling, cilia being required for all activity of the hedgehog pathway. The polypeptide is Intraflagellar transport protein 172 homolog (Ift172) (Mus musculus (Mouse)).